Reading from the N-terminus, the 295-residue chain is N-acetylmuramic acid 6-phosphate etherase (295 aa).

The SIS domain occupies Ala55–Lys218. The Proton donor role is filled by Glu83. Glu114 is a catalytic residue.

Belongs to the GCKR-like family. MurNAc-6-P etherase subfamily. As to quaternary structure, homodimer.

The enzyme catalyses N-acetyl-D-muramate 6-phosphate + H2O = N-acetyl-D-glucosamine 6-phosphate + (R)-lactate. It participates in amino-sugar metabolism; 1,6-anhydro-N-acetylmuramate degradation. Its pathway is amino-sugar metabolism; N-acetylmuramate degradation. It functions in the pathway cell wall biogenesis; peptidoglycan recycling. In terms of biological role, specifically catalyzes the cleavage of the D-lactyl ether substituent of MurNAc 6-phosphate, producing GlcNAc 6-phosphate and D-lactate. Together with AnmK, is also required for the utilization of anhydro-N-acetylmuramic acid (anhMurNAc) either imported from the medium or derived from its own cell wall murein, and thus plays a role in cell wall recycling. This is N-acetylmuramic acid 6-phosphate etherase from Yersinia pseudotuberculosis serotype O:1b (strain IP 31758).